The primary structure comprises 345 residues: Isocitrate/homoisocitrate dehydrogenase (345 aa).

69-71 (TTT) serves as a coordination point for NADH. The (2R,3S)-homoisocitrate site is built by Arg-86, Arg-96, Arg-111, Tyr-118, Lys-163, and Asn-165. Asn-165 provides a ligand contact to NADH. Mg(2+) contacts are provided by Asp-194, Asp-218, and Asp-222. NADH contacts are provided by residues 251-255 (GSAPD) and Asn-263.

This sequence belongs to the isocitrate and isopropylmalate dehydrogenases family. It depends on Mn(2+) as a cofactor. Mg(2+) serves as cofactor.

The enzyme catalyses D-threo-isocitrate + NAD(+) = 2-oxoglutarate + CO2 + NADH. It catalyses the reaction (2R,3S)-homoisocitrate + NAD(+) = 2-oxoadipate + CO2 + NADH. It functions in the pathway amino-acid biosynthesis; L-lysine biosynthesis via AAA pathway; L-alpha-aminoadipate from 2-oxoglutarate: step 4/5. In terms of biological role, catalyzes the NAD(+)-dependent oxidative decarboxylation of homoisocitrate to 2-oxoadipate (alpha-ketoadipate), and of isocitrate to 2-oxoglutarate, at near equal efficiency. May thus play a dual role in glutamate and lysine biosynthesis in vivo. Preferentially uses NAD over NADP. This chain is Isocitrate/homoisocitrate dehydrogenase, found in Pyrococcus horikoshii (strain ATCC 700860 / DSM 12428 / JCM 9974 / NBRC 100139 / OT-3).